A 290-amino-acid polypeptide reads, in one-letter code: Acetyl-coenzyme A carboxylase carboxyl transferase subunit beta (290 aa).

The 264-residue stretch at L27 to A290 folds into the CoA carboxyltransferase N-terminal domain. 4 residues coordinate Zn(2+): C31, C34, C50, and C53. The C4-type zinc-finger motif lies at C31–C53.

It belongs to the AccD/PCCB family. Acetyl-CoA carboxylase is a heterohexamer composed of biotin carboxyl carrier protein (AccB), biotin carboxylase (AccC) and two subunits each of ACCase subunit alpha (AccA) and ACCase subunit beta (AccD). The cofactor is Zn(2+).

The protein localises to the cytoplasm. The catalysed reaction is N(6)-carboxybiotinyl-L-lysyl-[protein] + acetyl-CoA = N(6)-biotinyl-L-lysyl-[protein] + malonyl-CoA. It functions in the pathway lipid metabolism; malonyl-CoA biosynthesis; malonyl-CoA from acetyl-CoA: step 1/1. Functionally, component of the acetyl coenzyme A carboxylase (ACC) complex. Biotin carboxylase (BC) catalyzes the carboxylation of biotin on its carrier protein (BCCP) and then the CO(2) group is transferred by the transcarboxylase to acetyl-CoA to form malonyl-CoA. The polypeptide is Acetyl-coenzyme A carboxylase carboxyl transferase subunit beta (Paraburkholderia phymatum (strain DSM 17167 / CIP 108236 / LMG 21445 / STM815) (Burkholderia phymatum)).